A 1004-amino-acid chain; its full sequence is MDINELIIGAQSADKHTREVAETQLLQWCDSDASQVFKALANVALQHEASLESRQFALLSLRKLITMYWSPGFESYRSTSNVEIDVKDFIREVLLKLCLNDNENTKIKNGASYCIVQISAVDFPDQWPQLLTVIYDAISHQHSLNAMSLLNEIYDDVVSEEMFFEGGIGLATMEIVFKVLNTETSTLIAKIAALKLLKACLLQMSSHNEYDEASRKSFVSQCLATSLQILGQLLTLNFGNVDVISQLKFKSIIYENLVFIKNDFSRKHFSSELQKQFKIMAIQDLENVTHINANVETTESEPLLETVHDCSIYIVEFLTSVCTLQFSVEEMNKIITSLTILCQLSSETREIWTSDFNTFVSKETGLAASYNVRDQANEFFTSLPNPQLSLIFKVVSNDIEHSTCNYSTLESLLYLLQCILLNDDEITGENIDQSLQILIKTLENILVSQEIPELILARAILTIPRVLDKFIDALPDIKPLTSAFLAKSLNLALKSDKELIKSATLIAFTYYCYFAELDSVLGPEVCSETQEKVIRIINQVSSDAEEDTNGALMEVLSQVISYNPKEPHSRKEILQAEFHLVFTISSEDPANVQVVVQSQECLEKLLDNINMDNYKNYIELCLPSFINVLDSNNANNYRYSPLLSLVLEFITVFLKKKPNDGFLPDEINQYLFEPLAKVLAFSTEDETLQLATEAFSYLIFNTDTRAMEPRLMDIMKVLERLLSLEVSDSAAMNVGPLVVAIFTRFSKEIQPLIGRILEAVVVRLIKTQNISTEQNLLSVLCFLTCNDPKQTVDFLSSFQIDNTDALTLVMRKWIEAFEVIRGEKRIKENIVALSNLFFLNDKRLQKVVVNGNLIPYEGDLIITRSMAKKMPDRYVQVPLYTKIIKLFVSELSFQSKQPNPEQLITSDIKQEVVNANKDDDNDDWEDVDDVLDYDKLKEYIDDDVDEEADDDSDDITGLMDVKESVVQLLVRFFKEVASKDVSGFHCIYETLSDSERKVLSEALL.

Methionine 1 is subject to N-acetylmethionine. In terms of domain architecture, Importin N-terminal spans 21 to 100 (AETQLLQWCD…REVLLKLCLN (80 aa)).

Belongs to the importin beta family. Interacts with NAP1.

It is found in the cytoplasm. The protein localises to the nucleus. Its subcellular location is the nuclear pore complex. Its function is as follows. Required for nuclear protein import and mediates docking of import substrate to distinct nucleoporins. Serves a receptor for nuclear localization signals. Mediates the nuclear import of TATA-binding protein (TBP) and of histones H2A and H2B. In Saccharomyces cerevisiae (strain ATCC 204508 / S288c) (Baker's yeast), this protein is Importin subunit beta-5 (KAP114).